The primary structure comprises 542 residues: TOM1-like protein 7 (542 aa).

A VHS domain is found at 29-158 (ATSELLRTPD…ELKRCGVKFP (130 aa)). Position 161 is a phosphoserine (serine 161). A GAT domain is found at 201 to 289 (EIESLSLSSL…VLARHDAIAS (89 aa)). A disordered region spans residues 303-340 (RETSSSLKTCGAAALESADSESSSSSSSSESETDEVED). Residues 314–332 (AAALESADSESSSSSSSSE) show a composition bias toward low complexity. Serine 521 bears the Phosphoserine mark. The interval 522-542 (FPARATGTSGAATAATVDRQP) is disordered. Low complexity predominate over residues 524–542 (ARATGTSGAATAATVDRQP).

It belongs to the TOM1 family. Preferentially expressed in flowers.

Its subcellular location is the membrane. In terms of biological role, might contribute to the loading of the ESCRT machinery. The polypeptide is TOM1-like protein 7 (Arabidopsis thaliana (Mouse-ear cress)).